Reading from the N-terminus, the 446-residue chain is Dimethylsulfoniopropionate lyase DddP (446 aa).

Over residues 1-13 the composition is skewed to basic and acidic residues; that stretch reads MNQHYSETRKIDP. The disordered stretch occupies residues 1-30; the sequence is MNQHYSETRKIDPSRGATLGDNTPNDNNRI. A divalent metal cation-binding residues include Asp295, Asp297, Asp307, His371, Glu406, and Glu421.

The protein belongs to the peptidase M24B family. As to quaternary structure, homodimer. A divalent metal cation is required as a cofactor.

It catalyses the reaction S,S-dimethyl-beta-propiothetin = acrylate + dimethyl sulfide + H(+). Able to cleave dimethylsulfoniopropionate (DMSP), releasing dimethyl sulfide (DMS). DMS is the principal form by which sulfur is transported from oceans to the atmosphere. The real activity of the protein is however subject to debate and it is unclear whether it constitutes a real dimethylsulfoniopropionate lyase in vivo: the low activity with DMSP as substrate suggests that DMSP is not its native substrate. The protein is Dimethylsulfoniopropionate lyase DddP of Roseovarius nubinhibens (strain ATCC BAA-591 / DSM 15170 / ISM).